The chain runs to 282 residues: Stress response regulator protein 1 (282 aa).

Composition is skewed to low complexity over residues 12–30 (NLSR…HSST) and 45–58 (NSQS…SNNN). 3 disordered regions span residues 12–31 (NLSR…SSTV), 43–84 (DINS…DDED), and 112–139 (LTPF…TTVV). Residues 66–77 (SDYNSYTHNQYY) show a composition bias toward polar residues. Residues 125-139 (SIISSKSSNKSTTVV) show a composition bias toward low complexity. The 119-residue stretch at 155–273 (SFLIVDDNII…LDFMANSIDD (119 aa)) folds into the Response regulatory domain. Asp-206 bears the 4-aspartylphosphate mark.

Functionally, required for stress adaptation, morphogenesis and virulence. This Candida albicans (strain SC5314 / ATCC MYA-2876) (Yeast) protein is Stress response regulator protein 1 (SRR1).